The sequence spans 968 residues: MKSQNSKEQKSDFSYKETLNLLKTDFSMRANSVVREPEIQNFWAKNNIDFKLGSNNSGEIFTLHDGPPYANGALHMGHALNKVLKDIINKYKTLRGFRVHYVPGWDCHGLPIELKVLQNLKSDERKNLDTLNLRKKATDYAHIQINNQMEGFKRWGIWGDWDNPYLTLKKSYESAQIGVFGKMFLNGYIYRGLKPVHWSPSSRTALAEAELEYPDEHYSKSIYISLKITKISEEILLNFVQENLNIKREFFENNSFITIWTTTPWTIPANEAVAVNPKIKYVFAIDEEKRIYLFAKDLSTEISNKFNKDLKVLLEVKGSQLENIEYQHPSKNKNCRIVIGGDYITTESGTGIVHTAPGHGVDDFNVGQKYDLPITCVVDEKGNLNEYSGQFQGSNVLKDANDLIIEYLKGNNLLLLQENYKHRYPYDWRTKKPTIFRATEQWFASVNGFRSSALQAIEDVEWMPATGKKRIYSMVVGRGDWCISRQRSWGVPIPVFYKKNGNDILLNSEIINHIQELFSEHGADIWWDWDVKNLLPEKYARESDLWKKGTDTMDVWFDSGSSWAAVCELRSELKYPADLYLEGSDQHRGWFQSSLLTSVAVNNKPPYKKVLTHGFALDENGRKMSKSLGNVVDPNIIINGGNNKKTEPAYGADVLRLWVSSVDYSVDVPIGSNILKQLADVYRKVRNTARYLLGNIHDYDPNIDSYEIDQLPLLDQWMLGRLVEVTDQISNAYENYEFSKFFQILQSFCVVDLSNFYLDIAKDRLYVSSKSQFRRRSCQFVMSKVVENLAVLISPVLCHMAEDIWQNIPYLTKEKSVFQRGWPIFAQSWKNQILNEHIANLRNLRVEINKAIEGCRNKQIIGAALETEVNYLPEDKVVKDSLIWLQEFGSQDVDLFRDWLIVSNFQVVSDLVENSLIIDNNALGKIQIIKAQGQKCDRCWHYQKETFNGIQNTKLCKRCSNIINLEFT.

The 'HIGH' region signature appears at 68-78 (PYANGALHMGH). L-isoleucyl-5'-AMP is bound at residue Glu-582. Positions 623-627 (KMSKS) match the 'KMSKS' region motif. Lys-626 lines the ATP pocket. The Zn(2+) site is built by Cys-936, Cys-939, Cys-956, and Cys-959.

The protein belongs to the class-I aminoacyl-tRNA synthetase family. IleS type 1 subfamily. As to quaternary structure, monomer. Zn(2+) serves as cofactor.

It localises to the cytoplasm. The catalysed reaction is tRNA(Ile) + L-isoleucine + ATP = L-isoleucyl-tRNA(Ile) + AMP + diphosphate. In terms of biological role, catalyzes the attachment of isoleucine to tRNA(Ile). As IleRS can inadvertently accommodate and process structurally similar amino acids such as valine, to avoid such errors it has two additional distinct tRNA(Ile)-dependent editing activities. One activity is designated as 'pretransfer' editing and involves the hydrolysis of activated Val-AMP. The other activity is designated 'posttransfer' editing and involves deacylation of mischarged Val-tRNA(Ile). In Prochlorococcus marinus (strain AS9601), this protein is Isoleucine--tRNA ligase.